Reading from the N-terminus, the 139-residue chain is Nuclear receptor 2C2-associated protein (139 aa).

This sequence belongs to the NR2C2AP family. Interacts with NR2C2/TR4. As to expression, expressed in all tissues examined, with highest expression in heart, skeletal muscle and pancreas.

The protein resides in the nucleus. May act as a repressor of NR2C2-mediated transactivation by suppressing the binding between NR2C2/TR4 and the TR4-response element in target genes. The polypeptide is Nuclear receptor 2C2-associated protein (NR2C2AP) (Homo sapiens (Human)).